The chain runs to 299 residues: Elongation factor Ts, mitochondrial (299 aa).

A mitochondrion-targeting transit peptide spans 1 to 18 (MLFQRRLHFHQFFGKTRV).

It belongs to the EF-Ts family.

Its subcellular location is the mitochondrion. In terms of biological role, associates with the EF-Tu.GDP complex and induces the exchange of GDP to GTP. It remains bound to the aminoacyl-tRNA.EF-Tu.GTP complex up to the GTP hydrolysis stage on the ribosome. This is Elongation factor Ts, mitochondrial (tsf1) from Schizosaccharomyces pombe (strain 972 / ATCC 24843) (Fission yeast).